Consider the following 248-residue polypeptide: Mannose-binding protein C (248 aa).

The first 20 residues, 1 to 20, serve as a signal peptide directing secretion; sequence MSLFPSLPLLLLSMVAASYS. One can recognise a Collagen-like domain in the interval 42–99; sequence GINGFPGKDGRDGTKGEKGEPGQGLRGLQGPPGKLGPPGNPGPSGSPGPKGQKGDPGK. The tract at residues 43-113 is disordered; the sequence is INGFPGKDGR…DSSLAASERK (71 aa). Proline 47 bears the 4-hydroxyproline mark. A compositionally biased stretch (basic and acidic residues) spans 49–61; sequence KDGRDGTKGEKGE. 4 positions are modified to 4-hydroxyproline: proline 73, proline 79, proline 82, and proline 88. Pro residues predominate over residues 75–87; the sequence is KLGPPGNPGPSGS. The span at 93–102 shows a compositional bias: basic and acidic residues; it reads QKGDPGKSPD. The stretch at 112–130 forms a coiled coil; the sequence is RKALQTEMARIKKWLTFSL. The 112-residue stretch at 134 to 245 folds into the C-type lectin domain; the sequence is VGNKFFLTNG…CSTSHLAVCE (112 aa). Intrachain disulfides connect cysteine 155–cysteine 244 and cysteine 222–cysteine 236.

Oligomeric complex of 3 or more homotrimers. Interacts with MASP1 and MASP2. Interacts with MEP1A and MEP1B and may inhibit their catalytic activity. Post-translationally, hydroxylation on proline residues within the sequence motif, GXPG, is most likely to be 4-hydroxy as this fits the requirement for 4-hydroxylation in vertebrates.

The protein resides in the secreted. Functionally, calcium-dependent lectin involved in innate immune defense. Binds mannose, fucose and N-acetylglucosamine on different microorganisms and activates the lectin complement pathway. Binds to late apoptotic cells, as well as to apoptotic blebs and to necrotic cells, but not to early apoptotic cells, facilitating their uptake by macrophages. The chain is Mannose-binding protein C (MBL2) from Gorilla gorilla gorilla (Western lowland gorilla).